Here is a 340-residue protein sequence, read N- to C-terminus: Uroporphyrinogen decarboxylase (340 aa).

Substrate is bound by residues 21–25 (RQAGR), Asp-71, Tyr-148, Ser-203, and His-316.

This sequence belongs to the uroporphyrinogen decarboxylase family. As to quaternary structure, homodimer.

The protein localises to the cytoplasm. It carries out the reaction uroporphyrinogen III + 4 H(+) = coproporphyrinogen III + 4 CO2. The protein operates within porphyrin-containing compound metabolism; protoporphyrin-IX biosynthesis; coproporphyrinogen-III from 5-aminolevulinate: step 4/4. Functionally, catalyzes the decarboxylation of four acetate groups of uroporphyrinogen-III to yield coproporphyrinogen-III. This Campylobacter jejuni subsp. jejuni serotype O:23/36 (strain 81-176) protein is Uroporphyrinogen decarboxylase.